Here is a 132-residue protein sequence, read N- to C-terminus: Large ribosomal subunit protein bL17 (132 aa).

This sequence belongs to the bacterial ribosomal protein bL17 family. In terms of assembly, part of the 50S ribosomal subunit. Contacts protein L32.

The sequence is that of Large ribosomal subunit protein bL17 from Saccharophagus degradans (strain 2-40 / ATCC 43961 / DSM 17024).